The primary structure comprises 928 residues: DNA-binding protein RFX6 (928 aa).

Disordered stretches follow at residues 1–22 (MAKVPVLEDAFLPAQPSPQVSP) and 53–102 (PGGA…AADL). A compositionally biased stretch (basic and acidic residues) spans 92 to 101 (SHDSKTKAAD). Positions 124-199 (TLQWLEENYI…YHYYGIGIKE (76 aa)) form a DNA-binding region, RFX-type winged-helix.

It belongs to the RFX family. As to quaternary structure, interacts with RFX3.

Its subcellular location is the nucleus. Its function is as follows. Transcription factor required to direct islet cell differentiation during endocrine pancreas development. Specifically required for the differentiation of 4 of the 5 islet cell types and for the production of insulin. Not required for pancreatic PP (polypeptide-producing) cells differentiation. Acts downstream of NEUROG3 and regulates the transcription factors involved in beta-cell maturation and function, thereby restricting the expression of the beta-cell differentiation and specification genes, and thus the beta-cell fate choice. Activates transcription by forming a heterodimer with RFX3 and binding to the X-box in the promoter of target genes. Involved in glucose-stimulated insulin secretion by promoting insulin and L-type calcium channel gene transcription. The sequence is that of DNA-binding protein RFX6 (RFX6) from Ailuropoda melanoleuca (Giant panda).